The chain runs to 257 residues: Flap endonuclease Xni (257 aa).

D112 contacts Mg(2+). A 5'-3' exonuclease domain is found at 169-256 (EQKKLVEFWA…LGFSLKQLRL (88 aa)). K(+) is bound by residues F179, A180, P188, V190, and I193. Positions 192 to 197 (GIGTKS) are interaction with DNA.

It belongs to the Xni family. Mg(2+) is required as a cofactor. Requires K(+) as cofactor.

In terms of biological role, has flap endonuclease activity. During DNA replication, flap endonucleases cleave the 5'-overhanging flap structure that is generated by displacement synthesis when DNA polymerase encounters the 5'-end of a downstream Okazaki fragment. The polypeptide is Flap endonuclease Xni (Pseudoalteromonas translucida (strain TAC 125)).